Consider the following 453-residue polypeptide: GTPase Der (453 aa).

EngA-type G domains follow at residues 4 to 169 (PIVA…SETP) and 177 to 352 (IKVA…RQFE). Residues 10–17 (GRPNVGKS), 57–61 (DTGGL), 120–123 (NKCE), 183–190 (GRPNVGKS), 230–234 (DTAGI), and 295–298 (NKWD) contribute to the GTP site. The 86-residue stretch at 353-438 (QRVTTSVINE…PIRLLWRGKK (86 aa)) folds into the KH-like domain.

It belongs to the TRAFAC class TrmE-Era-EngA-EngB-Septin-like GTPase superfamily. EngA (Der) GTPase family. Associates with the 50S ribosomal subunit.

Functionally, GTPase that plays an essential role in the late steps of ribosome biogenesis. In Acaryochloris marina (strain MBIC 11017), this protein is GTPase Der.